Consider the following 82-residue polypeptide: Small ribosomal subunit protein bS20 (82 aa).

The tract at residues 1–29 (MPNIKSAKKDLRRSRAAAVRNRAQRSALR) is disordered. Positions 16–29 (AAAVRNRAQRSALR) are enriched in low complexity.

Belongs to the bacterial ribosomal protein bS20 family.

In terms of biological role, binds directly to 16S ribosomal RNA. This is Small ribosomal subunit protein bS20 from Gemmatimonas aurantiaca (strain DSM 14586 / JCM 11422 / NBRC 100505 / T-27).